The sequence spans 154 residues: Endoribonuclease YbeY (154 aa).

Zn(2+)-binding residues include histidine 113, histidine 117, and histidine 123.

It belongs to the endoribonuclease YbeY family. Zn(2+) is required as a cofactor.

It localises to the cytoplasm. In terms of biological role, single strand-specific metallo-endoribonuclease involved in late-stage 70S ribosome quality control and in maturation of the 3' terminus of the 16S rRNA. The protein is Endoribonuclease YbeY of Vibrio cholerae serotype O1 (strain ATCC 39315 / El Tor Inaba N16961).